Reading from the N-terminus, the 289-residue chain is 4-diphosphocytidyl-2-C-methyl-D-erythritol kinase (289 aa).

Lys10 is a catalytic residue. 94–104 serves as a coordination point for ATP; sequence PVAAGLAGGSS. Asp136 is an active-site residue.

It belongs to the GHMP kinase family. IspE subfamily.

It carries out the reaction 4-CDP-2-C-methyl-D-erythritol + ATP = 4-CDP-2-C-methyl-D-erythritol 2-phosphate + ADP + H(+). Its pathway is isoprenoid biosynthesis; isopentenyl diphosphate biosynthesis via DXP pathway; isopentenyl diphosphate from 1-deoxy-D-xylulose 5-phosphate: step 3/6. Catalyzes the phosphorylation of the position 2 hydroxy group of 4-diphosphocytidyl-2C-methyl-D-erythritol. This Bacillus cytotoxicus (strain DSM 22905 / CIP 110041 / 391-98 / NVH 391-98) protein is 4-diphosphocytidyl-2-C-methyl-D-erythritol kinase.